We begin with the raw amino-acid sequence, 361 residues long: Peptide chain release factor 1 (361 aa).

At Gln235 the chain carries N5-methylglutamine. The interval 284–306 (SQQATAEAMTRKLQVGSGDRSQR) is disordered.

The protein belongs to the prokaryotic/mitochondrial release factor family. Methylated by PrmC. Methylation increases the termination efficiency of RF1.

Its subcellular location is the cytoplasm. Its function is as follows. Peptide chain release factor 1 directs the termination of translation in response to the peptide chain termination codons UAG and UAA. In Xylella fastidiosa (strain 9a5c), this protein is Peptide chain release factor 1.